The sequence spans 131 residues: Arsenate reductase 1 (131 aa).

Catalysis depends on nucleophile residues Cys10, Cys82, and Cys89. Intrachain disulfides connect Cys10/Cys82 and Cys82/Cys89.

This sequence belongs to the low molecular weight phosphotyrosine protein phosphatase family. Thioredoxin-coupled ArsC subfamily.

Its subcellular location is the cytoplasm. It catalyses the reaction arsenate + [thioredoxin]-dithiol + H(+) = arsenite + [thioredoxin]-disulfide + H2O. Catalyzes the reduction of arsenate [As(V)] to arsenite [As(III)]. The protein is Arsenate reductase 1 of Staphylococcus saprophyticus subsp. saprophyticus (strain ATCC 15305 / DSM 20229 / NCIMB 8711 / NCTC 7292 / S-41).